The following is a 181-amino-acid chain: Protein GrpE (181 aa).

The segment covering 1 to 13 (MENTQENPATQSA) has biased composition (polar residues). Positions 1-39 (MENTQENPATQSAEDIGSEKQAAQGAAPAAEAADAALAE) are disordered. Over residues 21 to 39 (QAAQGAAPAAEAADAALAE) the composition is skewed to low complexity.

It belongs to the GrpE family. As to quaternary structure, homodimer.

The protein localises to the cytoplasm. Participates actively in the response to hyperosmotic and heat shock by preventing the aggregation of stress-denatured proteins, in association with DnaK and GrpE. It is the nucleotide exchange factor for DnaK and may function as a thermosensor. Unfolded proteins bind initially to DnaJ; upon interaction with the DnaJ-bound protein, DnaK hydrolyzes its bound ATP, resulting in the formation of a stable complex. GrpE releases ADP from DnaK; ATP binding to DnaK triggers the release of the substrate protein, thus completing the reaction cycle. Several rounds of ATP-dependent interactions between DnaJ, DnaK and GrpE are required for fully efficient folding. The chain is Protein GrpE from Burkholderia lata (strain ATCC 17760 / DSM 23089 / LMG 22485 / NCIMB 9086 / R18194 / 383).